Reading from the N-terminus, the 65-residue chain is UPF0434 protein VFMJ11_A0475 (65 aa).

The protein belongs to the UPF0434 family.

The sequence is that of UPF0434 protein VFMJ11_A0475 from Aliivibrio fischeri (strain MJ11) (Vibrio fischeri).